A 399-amino-acid chain; its full sequence is uncharacterized protein (399 aa).

The next 11 membrane-spanning stretches (helical) occupy residues 19–39 (IFSI…PLFV), 46–66 (VNLL…LLMY), 91–111 (FYTI…PILG), 123–143 (QFEQ…IIAS), 146–166 (IYAK…IFIA), 183–203 (LLSA…ISYI), 225–247 (VAIL…MPIW), 283–303 (VLLL…LLGF), 307–327 (FGLD…FAYL), 335–355 (LFSI…YLGY), and 369–389 (IEYT…VYLL).

It is found in the host membrane. In terms of biological role, putative amino acid transporter. This is an uncharacterized protein from Saccharolobus islandicus (Sulfolobus islandicus).